The primary structure comprises 250 residues: MNLKITINQQASISEKLIIANLEQLLIFRDNTFNKIDCDQQITLKDAVQISQILNDQGVLNYEGEINEQITTYLEACGLYSQGQGQFIKRTLQTKKINIPQQDFNNCYGKYDYIEQKFQNQINFFKQVDLKGNQETIDENELLNDGVEVKQVESCASKPRACANCTCGRKEMEEKQDKEQLLEQLKNNSVKGCGSCYLGDAFRCANCPFRGLPAFKDGEQVKVLQDDVFLKEKEETDQIKLENGKVKLMI.

The tract at residues 1 to 102 is N-terminal SAM-like domain; that stretch reads MNLKITINQQ…QTKKINIPQQ (102 aa). Residues 102–149 are linker; sequence QDFNNCYGKYDYIEQKFQNQINFFKQVDLKGNQETIDENELLNDGVEV. [2Fe-2S] cluster-binding residues include cysteine 155, cysteine 162, cysteine 165, and cysteine 167. The tract at residues 155–167 is fe-S binding site A; it reads CASKPRACANCTC. Residues cysteine 193, cysteine 196, cysteine 204, and cysteine 207 each coordinate [4Fe-4S] cluster. 2 short sequence motifs (cx2C motif) span residues 193–196 and 204–207; these read CGSC and CANC. Residues 193–207 form a fe-S binding site B region; it reads CGSCYLGDAFRCANC.

This sequence belongs to the anamorsin family. Monomer. [2Fe-2S] cluster serves as cofactor. [4Fe-4S] cluster is required as a cofactor.

It localises to the cytoplasm. The protein localises to the mitochondrion intermembrane space. Functionally, component of the cytosolic iron-sulfur (Fe-S) protein assembly (CIA) machinery. Required for the maturation of extramitochondrial Fe-S proteins. Part of an electron transfer chain functioning in an early step of cytosolic Fe-S biogenesis, facilitating the de novo assembly of a [4Fe-4S] cluster on the cytosolic Fe-S scaffold complex. Electrons are transferred from NADPH via a FAD- and FMN-containing diflavin oxidoreductase. Together with the diflavin oxidoreductase, also required for the assembly of the diferric tyrosyl radical cofactor of ribonucleotide reductase (RNR), probably by providing electrons for reduction during radical cofactor maturation in the catalytic small subunit. In Paramecium tetraurelia, this protein is Anamorsin homolog 2.